A 401-amino-acid chain; its full sequence is uncharacterized protein (401 aa).

This is an uncharacterized protein from Acanthamoeba polyphaga mimivirus (APMV).